The chain runs to 89 residues: MALTQEQKMEIISKYQLHEKDTGSPEVQIAILTERINQLTEHLKVHKKDFHSRRGLLKMVGQRRSLLNYLKRKDFERYRAIVEKLGLRK.

Belongs to the universal ribosomal protein uS15 family. In terms of assembly, part of the 30S ribosomal subunit. Forms a bridge to the 50S subunit in the 70S ribosome, contacting the 23S rRNA.

Its function is as follows. One of the primary rRNA binding proteins, it binds directly to 16S rRNA where it helps nucleate assembly of the platform of the 30S subunit by binding and bridging several RNA helices of the 16S rRNA. In terms of biological role, forms an intersubunit bridge (bridge B4) with the 23S rRNA of the 50S subunit in the ribosome. This is Small ribosomal subunit protein uS15 from Carboxydothermus hydrogenoformans (strain ATCC BAA-161 / DSM 6008 / Z-2901).